The sequence spans 448 residues: MSERSLLVVVLAAGEGTRMASRLPKVLHRIAGRSMLHHVLETTRQAGATRVAVVIGPDREDVAAEAHRVRPDAQVFVQTERLGTAHAVLAARAALEEPADDVLVLYADTPLLRPETLENLRAPLADGAAVAVLGFRPADPTGYGRLLTQGDALVAIREEKDATPDERRVDFCNAGVMALRAREALSILTRIGNANAKGEYYLTDAVEIARADGLSAVATEAEVDEVAGVNSRLQLAEAEAILQGRLRRAAMAGGATLVAPETVFLSVDTRLGRDVLVEPNVVFGPGVTVEDDVVIHAFSHLEGAHLERGVSIGPYARLRPGTRLGEGVRIGNFVETKAALIDAGAKVNHLSYVGDAHVGSNANVGAGTITCNYDGFSKHRTEIGAGAFIGTNSSLVAPVSVGAGAYIGSGSVITDDVPADALALGRGRQAVKEGWAAALRAARGKPKV.

The segment at 1–232 (MSERSLLVVV…VDEVAGVNSR (232 aa)) is pyrophosphorylase. UDP-N-acetyl-alpha-D-glucosamine-binding positions include 11–14 (LAAG), lysine 25, glutamine 78, and 83–84 (GT). Aspartate 108 is a binding site for Mg(2+). Residues glycine 144, glutamate 158, asparagine 173, and asparagine 230 each coordinate UDP-N-acetyl-alpha-D-glucosamine. Asparagine 230 contributes to the Mg(2+) binding site. The linker stretch occupies residues 233 to 253 (LQLAEAEAILQGRLRRAAMAG). The segment at 254–448 (GATLVAPETV…LRAARGKPKV (195 aa)) is N-acetyltransferase. UDP-N-acetyl-alpha-D-glucosamine contacts are provided by arginine 319 and lysine 337. Histidine 349 acts as the Proton acceptor in catalysis. Residues tyrosine 352 and asparagine 363 each contribute to the UDP-N-acetyl-alpha-D-glucosamine site. Acetyl-CoA is bound by residues alanine 366, 372 to 373 (NY), serine 409, and arginine 426.

It in the N-terminal section; belongs to the N-acetylglucosamine-1-phosphate uridyltransferase family. This sequence in the C-terminal section; belongs to the transferase hexapeptide repeat family. In terms of assembly, homotrimer. Requires Mg(2+) as cofactor.

It is found in the cytoplasm. It carries out the reaction alpha-D-glucosamine 1-phosphate + acetyl-CoA = N-acetyl-alpha-D-glucosamine 1-phosphate + CoA + H(+). The catalysed reaction is N-acetyl-alpha-D-glucosamine 1-phosphate + UTP + H(+) = UDP-N-acetyl-alpha-D-glucosamine + diphosphate. It participates in nucleotide-sugar biosynthesis; UDP-N-acetyl-alpha-D-glucosamine biosynthesis; N-acetyl-alpha-D-glucosamine 1-phosphate from alpha-D-glucosamine 6-phosphate (route II): step 2/2. Its pathway is nucleotide-sugar biosynthesis; UDP-N-acetyl-alpha-D-glucosamine biosynthesis; UDP-N-acetyl-alpha-D-glucosamine from N-acetyl-alpha-D-glucosamine 1-phosphate: step 1/1. The protein operates within bacterial outer membrane biogenesis; LPS lipid A biosynthesis. In terms of biological role, catalyzes the last two sequential reactions in the de novo biosynthetic pathway for UDP-N-acetylglucosamine (UDP-GlcNAc). The C-terminal domain catalyzes the transfer of acetyl group from acetyl coenzyme A to glucosamine-1-phosphate (GlcN-1-P) to produce N-acetylglucosamine-1-phosphate (GlcNAc-1-P), which is converted into UDP-GlcNAc by the transfer of uridine 5-monophosphate (from uridine 5-triphosphate), a reaction catalyzed by the N-terminal domain. The protein is Bifunctional protein GlmU of Azorhizobium caulinodans (strain ATCC 43989 / DSM 5975 / JCM 20966 / LMG 6465 / NBRC 14845 / NCIMB 13405 / ORS 571).